A 595-amino-acid polypeptide reads, in one-letter code: MTDLTAQAACLTRDHLDDPVIGELRNRFGPDAFTVQATRTGVPVVWVKREQLLEVGDFLKKLPKPYVMLFDLHGMDERLRTHRHGLPAADFSVFYHLISIDRNRDIMLKVALSENDMRLPTFTKLFPNANWYERETWEMFGMTFDGHPHLTRLLMPPTWTGHPLRKDYPARATEFDPFELTKAKQDLEMEALTFKPEDWGMKRSTENEDFMFLNLGPNHPSSHGAFRIILQLDGEEIVDCVPDIGYHHRGAEKMGERQSWHSYIPYTDRIEYLGGCVNEMPYVLAVEKLAGITVPDRVNVIRVMLSELFRINSHLLYISTFIQDVGAMTPVFFAFTDRQKIYDVVEAITGFRMHPAWFRIGGVAHDLPRGWDKLLRDFLDWMPKRLDSYEKAALRNTILIARSKGVAAYGAKEALDWGCTGAALRATGIDFDVRKARPYSGYENFDFEVPVGGGVSDCYTRVMLKVEELRQSLRILEQCLNNMPEGPFKADHPLTTPPPKERTLQHIETLITHFLQVSWGPVMPANESFQMIEATKGINSYYLTSDGSTMSYRTRIRTPSFAHLQQIPVAVRGSLVSDLIVHLGSIDFVMSDVDR.

Residues 1–185 (MTDLTAQAAC…DPFELTKAKQ (185 aa)) are NADH dehydrogenase I subunit C. The NADH dehydrogenase I subunit D stretch occupies residues 209 to 595 (DFMFLNLGPN…IDFVMSDVDR (387 aa)).

This sequence in the N-terminal section; belongs to the complex I 30 kDa subunit family. In the C-terminal section; belongs to the complex I 49 kDa subunit family. As to quaternary structure, NDH-1 is composed of 13 different subunits. Subunits NuoB, CD, E, F, and G constitute the peripheral sector of the complex.

The protein localises to the cell inner membrane. It carries out the reaction a quinone + NADH + 5 H(+)(in) = a quinol + NAD(+) + 4 H(+)(out). Its function is as follows. NDH-1 shuttles electrons from NADH, via FMN and iron-sulfur (Fe-S) centers, to quinones in the respiratory chain. The immediate electron acceptor for the enzyme in this species is believed to be ubiquinone. Couples the redox reaction to proton translocation (for every two electrons transferred, four hydrogen ions are translocated across the cytoplasmic membrane), and thus conserves the redox energy in a proton gradient. The polypeptide is NADH-quinone oxidoreductase subunit C/D (Enterobacter sp. (strain 638)).